Consider the following 463-residue polypeptide: L-seryl-tRNA(Sec) selenium transferase (463 aa).

An N6-(pyridoxal phosphate)lysine modification is found at Lys295.

It belongs to the SelA family. In terms of assembly, homodecamer; pentamer of dimers. Binds only one seryl-tRNA(Sec) per dimer. It depends on pyridoxal 5'-phosphate as a cofactor.

The protein resides in the cytoplasm. The catalysed reaction is L-seryl-tRNA(Sec) + selenophosphate + H(+) = L-selenocysteinyl-tRNA(Sec) + phosphate. The protein operates within aminoacyl-tRNA biosynthesis; selenocysteinyl-tRNA(Sec) biosynthesis; selenocysteinyl-tRNA(Sec) from L-seryl-tRNA(Sec) (bacterial route): step 1/1. Converts seryl-tRNA(Sec) to selenocysteinyl-tRNA(Sec) required for selenoprotein biosynthesis. In Salmonella enteritidis PT4 (strain P125109), this protein is L-seryl-tRNA(Sec) selenium transferase.